Reading from the N-terminus, the 400-residue chain is Large envelope protein (400 aa).

N-acetylmethionine is present on M1. G2 carries N-myristoyl glycine; by host lipidation. Positions 2 to 119 (GGWSSKPRQG…PPLRDSHPQA (118 aa)) are pre-S1. Positions 2 to 174 (GGWSSKPRQG…FSRIGDPALN (173 aa)) are pre-S. Residues 2–181 (GGWSSKPRQG…ALNMENITSG (180 aa)) lie on the Virion surface; in external conformation side of the membrane. The Intravirion; in internal conformation segment spans residues 2 to 253 (GGWSSKPRQG…PGYRWMCLRR (252 aa)). N-linked (GlcNAc...) asparagine glycosylation is present at W4. The interval 85–118 (LTTVPAAPPPASSNRQSGKQPTPISPPLRDSHPQ) is disordered. A compositionally biased stretch (polar residues) spans 96–106 (SSNRQSGKQPT). Residues 120–174 (MQWNSTTFHQTLQDPRVRGLYFPAGGSSSGTVNPVPTTASPISSIFSRIGDPALN) are pre-S2. Residues 182 to 202 (FLGPLLVLQAGFFLLTRILTI) form a helical membrane-spanning segment. Residues 203-253 (PQSLDSWWTSLNFLGGTTVCLGQNSQSPISNHSPTSCPPTCPGYRWMCLRR) are Intravirion; in external conformation-facing. Residues 254-274 (FIIFLFILLLCLIFLLVLLDY) traverse the membrane as a helical segment. At 275–348 (QGMLPVCPLI…WASARFSWLS (74 aa)) the chain is on the virion surface side. N320 is a glycosylation site (N-linked (GlcNAc...) asparagine; by host). The helical transmembrane segment at 349-369 (LLVPFVQWFVGLSPTVWLSVI) threads the bilayer. Residues 370–375 (WMMWYW) lie on the Intravirion side of the membrane. Residues 376–398 (GPSLYSILSPFLPLLPIFFCLWV) form a helical membrane-spanning segment. The Virion surface portion of the chain corresponds to 399–400 (YI).

This sequence belongs to the orthohepadnavirus major surface antigen family. As to quaternary structure, in its internal form (Li-HBsAg), interacts with the capsid protein and with the isoform S. Interacts with host chaperone CANX. In terms of assembly, associates with host chaperone CANX through its pre-S2 N glycan; this association may be essential for isoform M proper secretion. Interacts with isoform L. Interacts with the antigens of satellite virus HDV (HDVAgs); this interaction is required for encapsidation of HDV genomic RNA. Isoform M is N-terminally acetylated by host at a ratio of 90%, and N-glycosylated by host at the pre-S2 region. In terms of processing, myristoylated.

It localises to the virion membrane. Functionally, the large envelope protein exists in two topological conformations, one which is termed 'external' or Le-HBsAg and the other 'internal' or Li-HBsAg. In its external conformation the protein attaches the virus to cell receptors and thereby initiating infection. This interaction determines the species specificity and liver tropism. This attachment induces virion internalization predominantly through caveolin-mediated endocytosis. The large envelope protein also assures fusion between virion membrane and endosomal membrane. In its internal conformation the protein plays a role in virion morphogenesis and mediates the contact with the nucleocapsid like a matrix protein. In terms of biological role, the middle envelope protein plays an important role in the budding of the virion. It is involved in the induction of budding in a nucleocapsid independent way. In this process the majority of envelope proteins bud to form subviral lipoprotein particles of 22 nm of diameter that do not contain a nucleocapsid. This Homo sapiens (Human) protein is Large envelope protein.